Consider the following 97-residue polypeptide: Intermembrane phospholipid transport system binding protein MlaB (97 aa).

The region spanning methionine 1–arginine 97 is the STAS domain.

The complex is composed of two ATP-binding proteins (MlaF), two transmembrane proteins (MlaE), two cytoplasmic solute-binding proteins (MlaB) and six periplasmic solute-binding proteins (MlaD).

Its subcellular location is the cytoplasm. Functionally, part of the ABC transporter complex MlaFEDB, which is involved in a phospholipid transport pathway that maintains lipid asymmetry in the outer membrane by retrograde trafficking of phospholipids from the outer membrane to the inner membrane. MlaB plays critical roles in both the assembly and activity of the complex. May act by modulating MlaF structure and stability. The chain is Intermembrane phospholipid transport system binding protein MlaB from Escherichia coli (strain K12).